The sequence spans 1003 residues: Lon protease homolog 2, peroxisomal (1003 aa).

The Lon N-terminal domain occupies Leu14–Gln305. The disordered stretch occupies residues Asp367–Asp389. The segment covering Val368–Thr377 has biased composition (polar residues). Residue Gly520 to Thr527 coordinates ATP. Positions Ser773–Lys969 constitute a Lon proteolytic domain. Active-site residues include Ser874 and Lys917.

The protein belongs to the peptidase S16 family.

Its subcellular location is the peroxisome matrix. The catalysed reaction is Hydrolysis of proteins in presence of ATP.. Its function is as follows. ATP-dependent serine protease that mediates the selective degradation of misfolded and unassembled polypeptides in the peroxisomal matrix. Necessary for type 2 peroxisome targeting signal (PTS2)-containing protein processing and facilitates peroxisome matrix protein import. This chain is Lon protease homolog 2, peroxisomal, found in Kluyveromyces lactis (strain ATCC 8585 / CBS 2359 / DSM 70799 / NBRC 1267 / NRRL Y-1140 / WM37) (Yeast).